A 154-amino-acid chain; its full sequence is Probable transcription factor At4g00232 (154 aa).

The segment at 1–44 is disordered; it reads MDKANTNRSKVCGGSGEAKLTGKKRKNVSAKQSKKDAKKENSQM.

Belongs to the GeBP family.

The protein is Probable transcription factor At4g00232 of Arabidopsis thaliana (Mouse-ear cress).